The chain runs to 131 residues: Lysosomal enzyme trafficking factor (131 aa).

2 consecutive transmembrane segments (helical) span residues 8–28 (MGWIGVSLYLFVSAAAFYYVF) and 66–86 (LPFWLWATLFLIPYFQVFLFL).

It belongs to the LYSET family.

It localises to the golgi apparatus membrane. Functionally, required for mannose-6-phosphate-dependent trafficking of lysosomal enzymes. LYSET bridges GlcNAc-1-phosphate transferase (GNPTAB), to the membrane-bound transcription factor site-1 protease (MBTPS1), thus allowing proteolytic activation of the GNPTAB. GNPTAB is involved in the regulation of M6P-dependent Golgi-to-lysosome trafficking of lysosomal enzymes. LYSET is thus an essential factor for maturation and delivery of lysosomal hydrolases. This Xenopus laevis (African clawed frog) protein is Lysosomal enzyme trafficking factor (lyset-a).